Consider the following 63-residue polypeptide: Cysteine-rich venom protein 3 (63 aa).

The first 25 residues, 1-25, serve as a signal peptide directing secretion; that stretch reads MRKPITLILVVALALVLLATSEVSA. 3 disulfide bridges follow: C29–C43, C36–C48, and C42–C58.

Expressed by the venom gland.

The protein resides in the secreted. The protein is Cysteine-rich venom protein 3 of Pimpla hypochondriaca (Parasitoid wasp).